Consider the following 198-residue polypeptide: NAD(P)H-quinone oxidoreductase chain 6 (198 aa).

5 helical membrane-spanning segments follow: residues 9-29 (YISFLILAFLVIGAALGVVLL), 32-52 (IVYSAFLLGGVFLSISGIYIL), 61-81 (AQVLVYVGAVSVLILFAIMLV), 100-120 (TALVCTGIFALLSTMVLITPW), and 145-165 (LLPFELASVLLLMAMVGAIIL).

Belongs to the complex I subunit 6 family.

The protein resides in the membrane. It catalyses the reaction a plastoquinone + NADH + (n+1) H(+)(in) = a plastoquinol + NAD(+) + n H(+)(out). It carries out the reaction a plastoquinone + NADPH + (n+1) H(+)(in) = a plastoquinol + NADP(+) + n H(+)(out). NDH-1 shuttles electrons from NAD(P)H, via FMN and iron-sulfur (Fe-S) centers, to quinones in the respiratory chain. The immediate electron acceptor for the enzyme in this species is believed to be plastoquinone. Couples the redox reaction to proton translocation (for every two electrons transferred, four hydrogen ions are translocated across the cytoplasmic membrane), and thus conserves the redox energy in a proton gradient. This chain is NAD(P)H-quinone oxidoreductase chain 6 (ndhG), found in Synechocystis sp. (strain ATCC 27184 / PCC 6803 / Kazusa).